We begin with the raw amino-acid sequence, 695 residues long: Parasporal crystal protein Cry18Ca (695 aa).

The protein belongs to the delta endotoxin family.

In terms of biological role, binds to the brush border membrane vesicles of scarab larvae and damages the gut wall somehow to allow the vegetative cells of P.popilliae to enter the hemolymph. This chain is Parasporal crystal protein Cry18Ca (cry18Ca), found in Paenibacillus popilliae (Bacillus popilliae).